A 140-amino-acid chain; its full sequence is Small ribosomal subunit protein uS19 (140 aa).

Residues 43-71 form a disordered region; the sequence is IERGLTTEQQKLRETVRDADPQKTANDPI. Basic and acidic residues predominate over residues 52–63; sequence QKLRETVRDADP.

Belongs to the universal ribosomal protein uS19 family.

Functionally, protein S19 forms a complex with S13 that binds strongly to the 16S ribosomal RNA. The sequence is that of Small ribosomal subunit protein uS19 from Haloquadratum walsbyi (strain DSM 16790 / HBSQ001).